A 235-amino-acid polypeptide reads, in one-letter code: Aspartate/glutamate leucyltransferase (235 aa).

It belongs to the R-transferase family. Bpt subfamily.

Its subcellular location is the cytoplasm. It catalyses the reaction N-terminal L-glutamyl-[protein] + L-leucyl-tRNA(Leu) = N-terminal L-leucyl-L-glutamyl-[protein] + tRNA(Leu) + H(+). The enzyme catalyses N-terminal L-aspartyl-[protein] + L-leucyl-tRNA(Leu) = N-terminal L-leucyl-L-aspartyl-[protein] + tRNA(Leu) + H(+). In terms of biological role, functions in the N-end rule pathway of protein degradation where it conjugates Leu from its aminoacyl-tRNA to the N-termini of proteins containing an N-terminal aspartate or glutamate. This Pseudomonas syringae pv. syringae (strain B728a) protein is Aspartate/glutamate leucyltransferase.